The sequence spans 545 residues: Chaperonin GroEL (545 aa).

ATP is bound by residues 29–32, Lys-50, 86–90, Gly-414, 480–482, and Asp-496; these read TMGP, DGTTT, and NAA.

The protein belongs to the chaperonin (HSP60) family. In terms of assembly, forms a cylinder of 14 subunits composed of two heptameric rings stacked back-to-back. Interacts with the co-chaperonin GroES.

The protein localises to the cytoplasm. The catalysed reaction is ATP + H2O + a folded polypeptide = ADP + phosphate + an unfolded polypeptide.. Functionally, together with its co-chaperonin GroES, plays an essential role in assisting protein folding. The GroEL-GroES system forms a nano-cage that allows encapsulation of the non-native substrate proteins and provides a physical environment optimized to promote and accelerate protein folding. This is Chaperonin GroEL from Malacoplasma penetrans (strain HF-2) (Mycoplasma penetrans).